Here is a 368-residue protein sequence, read N- to C-terminus: Nuclease EXOG, mitochondrial (368 aa).

A mitochondrion-targeting transit peptide spans 1-41 (MAIKSIASRLRGSRRFLSGFVAGAVVGAAGAGLAALQFFRS). The active-site Proton acceptor is His140. An a divalent metal cation-binding site is contributed by Asn171.

This sequence belongs to the DNA/RNA non-specific endonuclease family. Homodimer. A divalent metal cation serves as cofactor. As to expression, ubiquitous.

Its subcellular location is the mitochondrion inner membrane. In terms of biological role, endo/exonuclease with nicking activity towards supercoiled DNA, a preference for single-stranded DNA and 5'-3' exonuclease activity. The sequence is that of Nuclease EXOG, mitochondrial (EXOG) from Homo sapiens (Human).